A 155-amino-acid chain; its full sequence is Small ribosomal subunit protein uS7c (155 aa).

The protein belongs to the universal ribosomal protein uS7 family. In terms of assembly, part of the 30S ribosomal subunit.

Its subcellular location is the plastid. The protein localises to the chloroplast. In terms of biological role, one of the primary rRNA binding proteins, it binds directly to 16S rRNA where it nucleates assembly of the head domain of the 30S subunit. This is Small ribosomal subunit protein uS7c (rps7) from Physcomitrium patens (Spreading-leaved earth moss).